The following is a 312-amino-acid chain: Large ribosomal subunit protein uL15m (312 aa).

A disordered region spans residues Arg-63–Gly-89. The span at Pro-70 to Thr-82 shows a compositional bias: gly residues.

This sequence belongs to the universal ribosomal protein uL15 family. As to quaternary structure, component of the mitochondrial large ribosomal subunit (mt-LSU). Mature N.crassa 74S mitochondrial ribosomes consist of a small (37S) and a large (54S) subunit. The 37S small subunit contains a 16S ribosomal RNA (16S mt-rRNA) and 32 different proteins. The 54S large subunit contains a 23S rRNA (23S mt-rRNA) and 42 different proteins.

Its subcellular location is the mitochondrion. In terms of biological role, component of the mitochondrial ribosome (mitoribosome), a dedicated translation machinery responsible for the synthesis of mitochondrial genome-encoded proteins, including at least some of the essential transmembrane subunits of the mitochondrial respiratory chain. The mitoribosomes are attached to the mitochondrial inner membrane and translation products are cotranslationally integrated into the membrane. The polypeptide is Large ribosomal subunit protein uL15m (mrpl10) (Neurospora crassa (strain ATCC 24698 / 74-OR23-1A / CBS 708.71 / DSM 1257 / FGSC 987)).